The following is a 254-amino-acid chain: 5-oxoprolinase subunit A (254 aa).

The protein belongs to the LamB/PxpA family. As to quaternary structure, forms a complex composed of PxpA, PxpB and PxpC.

It carries out the reaction 5-oxo-L-proline + ATP + 2 H2O = L-glutamate + ADP + phosphate + H(+). Its function is as follows. Catalyzes the cleavage of 5-oxoproline to form L-glutamate coupled to the hydrolysis of ATP to ADP and inorganic phosphate. The sequence is that of 5-oxoprolinase subunit A from Acinetobacter baylyi (strain ATCC 33305 / BD413 / ADP1).